The chain runs to 697 residues: Elongation factor G (697 aa).

Positions 10-285 constitute a tr-type G domain; the sequence is AKTRNIGIMA…GVIDYLPSPL (276 aa). GTP is bound by residues 19-26, 83-87, and 137-140; these read AHIDAGKT, DTPGH, and NKMD.

This sequence belongs to the TRAFAC class translation factor GTPase superfamily. Classic translation factor GTPase family. EF-G/EF-2 subfamily.

It localises to the cytoplasm. Its function is as follows. Catalyzes the GTP-dependent ribosomal translocation step during translation elongation. During this step, the ribosome changes from the pre-translocational (PRE) to the post-translocational (POST) state as the newly formed A-site-bound peptidyl-tRNA and P-site-bound deacylated tRNA move to the P and E sites, respectively. Catalyzes the coordinated movement of the two tRNA molecules, the mRNA and conformational changes in the ribosome. The sequence is that of Elongation factor G from Lactobacillus acidophilus (strain ATCC 700396 / NCK56 / N2 / NCFM).